The following is a 93-amino-acid chain: Cobalt transport protein CbiN (93 aa).

The next 2 helical transmembrane spans lie at 5–25 (LMLL…NHGG) and 63–83 (LLFT…LGYC).

This sequence belongs to the CbiN family. Forms an energy-coupling factor (ECF) transporter complex composed of an ATP-binding protein (A component, CbiO), a transmembrane protein (T component, CbiQ) and 2 possible substrate-capture proteins (S components, CbiM and CbiN) of unknown stoichimetry.

The protein localises to the cell inner membrane. It participates in cofactor biosynthesis; adenosylcobalamin biosynthesis. In terms of biological role, part of the energy-coupling factor (ECF) transporter complex CbiMNOQ involved in cobalt import. This Salmonella gallinarum (strain 287/91 / NCTC 13346) protein is Cobalt transport protein CbiN.